The chain runs to 789 residues: MTIQQVLLLLLLWMWLLHPCRTEMLFRRTPDLRPKGFVGRTSGSDGKALHRQKRGWMWNQFFLLEEYTGSDYQYVGKLHSDQDKGDGSLKYILSGDGAGTLFIIDEKTGDIHATRRIDREEKAFYTLRAQAINRRTLRPVEPESEFVIKIHDINDNEPTFPEEIYTASVPEMSVVGTSVVQVTATDADDPSYGNSARIIYSILQGQPYFSVEPETGIIRTALPNMNRENREQYQVVIQAKDMGGQMGGLSGTTTVNITLTDVNDNPPRFPQSTIHLRIPESSPVGTPIGSIKATDADTGKNAEVEYRIIDGDGTDMFDIVTQRDTQEGIITVRKPLDYETRRLYTLKVEAENTHVDPRFYYLGPFKDTTIVKISVEDVDEPPVFSRSSYLFEVHEDIELGTIIGTVMARDPDSASSPIRFSLDRHTDLDRIFNIHSGNGSIYTSKPLDREISQWHNLSVIAAEINNLKDTTRVPVYVRILDVNDNAPQFAVFYDTFVCENARAGQLIQTISAVDKDDPLGGQKFFFSLAAVNPNFTVQDNEDNTARILTRRNGFSRHEISTYLLPVVISDNDYPIQSSTGTLTIRVCACDSRGNMQSCNAEALLLPAGLSTGALIAILLCIIILLVIVVLFAALKRQRKKEPLILSKEDIRDNIVSYNDEGGGEEDTQAFDIGTLRNPAAIEDKKLRRDIIPETLFVPRRTPSAPDNTDVRDFINQRLKEHDSDPSAPPYDSLATYAYEGNDSIAESLSSLESGTTEGDQNYDYLREWGPRFNKLAEMYGGGESDKDAS.

An N-terminal signal peptide occupies residues 1–22; sequence MTIQQVLLLLLLWMWLLHPCRT. Positions 23-54 are excised as a propeptide; sequence EMLFRRTPDLRPKGFVGRTSGSDGKALHRQKR. Cadherin domains follow at residues 55 to 160, 161 to 269, 270 to 384, 385 to 487, and 488 to 606; these read GWMW…EPTF, PEEI…PPRF, PQST…PPVF, SRSS…DNAP, and QFAV…LLLP. Residues 55–606 lie on the Extracellular side of the membrane; it reads GWMWNQFFLL…SCNAEALLLP (552 aa). A glycan (N-linked (GlcNAc...) asparagine) is linked at N256. N-linked (GlcNAc...) asparagine glycosylation is found at N438, N456, and N534. The chain crosses the membrane as a helical span at residues 607 to 634; the sequence is AGLSTGALIAILLCIIILLVIVVLFAAL. Topologically, residues 635-789 are cytoplasmic; the sequence is KRQRKKEPLI…GGGESDKDAS (155 aa).

The protein resides in the cell membrane. Its function is as follows. Cadherins are calcium-dependent cell adhesion proteins. They preferentially interact with themselves in a homophilic manner in connecting cells; cadherins may thus contribute to the sorting of heterogeneous cell types. In Gallus gallus (Chicken), this protein is Cadherin-10 (CDH10).